We begin with the raw amino-acid sequence, 275 residues long: Formamidopyrimidine-DNA glycosylase (275 aa).

Proline 2 (schiff-base intermediate with DNA) is an active-site residue. The active-site Proton donor is glutamate 3. The active-site Proton donor; for beta-elimination activity is the lysine 58. Residues histidine 93, arginine 111, and arginine 156 each coordinate DNA. An FPG-type zinc finger spans residues phenylalanine 241–arginine 275. Arginine 265 functions as the Proton donor; for delta-elimination activity in the catalytic mechanism.

This sequence belongs to the FPG family. As to quaternary structure, monomer. Requires Zn(2+) as cofactor.

The enzyme catalyses Hydrolysis of DNA containing ring-opened 7-methylguanine residues, releasing 2,6-diamino-4-hydroxy-5-(N-methyl)formamidopyrimidine.. It catalyses the reaction 2'-deoxyribonucleotide-(2'-deoxyribose 5'-phosphate)-2'-deoxyribonucleotide-DNA = a 3'-end 2'-deoxyribonucleotide-(2,3-dehydro-2,3-deoxyribose 5'-phosphate)-DNA + a 5'-end 5'-phospho-2'-deoxyribonucleoside-DNA + H(+). Its function is as follows. Involved in base excision repair of DNA damaged by oxidation or by mutagenic agents. Acts as a DNA glycosylase that recognizes and removes damaged bases. Has a preference for oxidized purines, such as 7,8-dihydro-8-oxoguanine (8-oxoG). Has AP (apurinic/apyrimidinic) lyase activity and introduces nicks in the DNA strand. Cleaves the DNA backbone by beta-delta elimination to generate a single-strand break at the site of the removed base with both 3'- and 5'-phosphates. The sequence is that of Formamidopyrimidine-DNA glycosylase from Burkholderia multivorans (strain ATCC 17616 / 249).